Here is a 501-residue protein sequence, read N- to C-terminus: Aspartyl/glutamyl-tRNA(Asn/Gln) amidotransferase subunit B (501 aa).

The tract at residues 271 to 299 (VQETRHYQETDGSTSKGRPKETAEDYRYF) is disordered. The segment covering 288–299 (RPKETAEDYRYF) has biased composition (basic and acidic residues).

It belongs to the GatB/GatE family. GatB subfamily. As to quaternary structure, heterotrimer of A, B and C subunits.

The catalysed reaction is L-glutamyl-tRNA(Gln) + L-glutamine + ATP + H2O = L-glutaminyl-tRNA(Gln) + L-glutamate + ADP + phosphate + H(+). It catalyses the reaction L-aspartyl-tRNA(Asn) + L-glutamine + ATP + H2O = L-asparaginyl-tRNA(Asn) + L-glutamate + ADP + phosphate + 2 H(+). Allows the formation of correctly charged Asn-tRNA(Asn) or Gln-tRNA(Gln) through the transamidation of misacylated Asp-tRNA(Asn) or Glu-tRNA(Gln) in organisms which lack either or both of asparaginyl-tRNA or glutaminyl-tRNA synthetases. The reaction takes place in the presence of glutamine and ATP through an activated phospho-Asp-tRNA(Asn) or phospho-Glu-tRNA(Gln). The sequence is that of Aspartyl/glutamyl-tRNA(Asn/Gln) amidotransferase subunit B from Corynebacterium diphtheriae (strain ATCC 700971 / NCTC 13129 / Biotype gravis).